The primary structure comprises 493 residues: Dipeptide permease D (493 aa).

13 helical membrane passes run 14–34 (VVALQIWEYFSFYGMRALLIL), 49–69 (ALFSAYCSLVYVTPILGGYLA), 91–111 (LVLGASEIAPTFLYLSLAIIV), 138–158 (GGFSLLYAAGNVGSIVAPIAC), 167–187 (WAMGFALAAIGMVAGLIIFLC), 212–232 (NWGWLLVLLTIAPLAIAVLFW), 235–255 (WAVYALIVATAIGLAVLGKIY), 267–287 (LGLIVTLTFFSMLFWAFAQQG), 312–332 (MFQSVNAFAVMLCGVVLAWLI), 344–364 (IWGKFALGLGLMSAGFSILTL), 379–399 (LMIAGLAVMGFAELFIDPVAM), 413–433 (VLTGIYMLLSGAIANYLAGVI), and 458–478 (VFSEITWGALACVGLVLLIWL).

This sequence belongs to the major facilitator superfamily. Proton-dependent oligopeptide transporter (POT/PTR) (TC 2.A.17) family. DtpD subfamily.

It localises to the cell inner membrane. Probable proton-dependent permease that transports dipeptides. The polypeptide is Dipeptide permease D (Citrobacter rodentium (strain ICC168) (Citrobacter freundii biotype 4280)).